Here is a 449-residue protein sequence, read N- to C-terminus: Adenylosuccinate synthetase isozyme 1 B (449 aa).

Residues 34–40 (GDEGKGK) and 62–64 (GHT) each bind GTP. D35 functions as the Proton acceptor in the catalytic mechanism. Mg(2+)-binding residues include D35 and G62. Substrate is bound at residue D35. Residues 35–38 (DEGK), 60–63 (NAGH), T155, R169, N248, T263, and R327 contribute to the IMP site. Residue H63 is the Proton donor of the active site. 323 to 329 (VTTGRKR) contributes to the substrate binding site. Residues R329, 355 to 357 (KLD), and 437 to 440 (GVGK) each bind GTP.

The protein belongs to the adenylosuccinate synthetase family. In terms of assembly, homodimer. Requires Mg(2+) as cofactor.

The protein localises to the cytoplasm. The catalysed reaction is IMP + L-aspartate + GTP = N(6)-(1,2-dicarboxyethyl)-AMP + GDP + phosphate + 2 H(+). It functions in the pathway purine metabolism; AMP biosynthesis via de novo pathway; AMP from IMP: step 1/2. Component of the purine nucleotide cycle (PNC), which interconverts IMP and AMP to regulate the nucleotide levels in various tissues, and which contributes to glycolysis and ammoniagenesis. Catalyzes the first committed step in the biosynthesis of AMP from IMP. The protein is Adenylosuccinate synthetase isozyme 1 B (adss1b) of Salmo salar (Atlantic salmon).